The chain runs to 314 residues: DNA-directed RNA polymerase subunit alpha (314 aa).

The segment at 1–227 is alpha N-terminal domain (alpha-NTD); it reads MTTFEIECIE…ELLFPLKEIN (227 aa). The segment at 237 to 314 is alpha C-terminal domain (alpha-CTD); that stretch reads IEDSKINQIL…LPKEKTSKSN (78 aa).

This sequence belongs to the RNA polymerase alpha chain family. In terms of assembly, in plastids the minimal PEP RNA polymerase catalytic core is composed of four subunits: alpha, beta, beta', and beta''. When a (nuclear-encoded) sigma factor is associated with the core the holoenzyme is formed, which can initiate transcription.

It localises to the plastid. Its subcellular location is the chloroplast. It catalyses the reaction RNA(n) + a ribonucleoside 5'-triphosphate = RNA(n+1) + diphosphate. Its function is as follows. DNA-dependent RNA polymerase catalyzes the transcription of DNA into RNA using the four ribonucleoside triphosphates as substrates. The protein is DNA-directed RNA polymerase subunit alpha of Pyrenomonas salina.